A 151-amino-acid polypeptide reads, in one-letter code: Transcription antitermination protein NusB (151 aa).

Belongs to the NusB family.

In terms of biological role, involved in transcription antitermination. Required for transcription of ribosomal RNA (rRNA) genes. Binds specifically to the boxA antiterminator sequence of the ribosomal RNA (rrn) operons. The sequence is that of Transcription antitermination protein NusB from Photobacterium profundum (strain SS9).